The following is a 447-amino-acid chain: Rab GDP dissociation inhibitor alpha (447 aa).

Ser-427 carries the phosphoserine modification.

Belongs to the Rab GDI family. Interacts with RHOH. Interacts with the non-phosphorylated forms of RAB1A, RAB3A, RAB5A, RAB5B, RAB5C, RAB8A, RAB8B, RAB12, RAB35, and RAB43. Interacts with RAB10. In terms of tissue distribution, high expression in brain, lower in other tissues.

It is found in the cytoplasm. The protein resides in the golgi apparatus. Its subcellular location is the trans-Golgi network. Its function is as follows. Regulates the GDP/GTP exchange reaction of most Rab proteins by inhibiting the dissociation of GDP from them, and the subsequent binding of GTP to them. Promotes the dissociation of GDP-bound Rab proteins from the membrane and inhibits their activation. Promotes the dissociation of RAB1A, RAB3A, RAB5A and RAB10 from membranes. The sequence is that of Rab GDP dissociation inhibitor alpha (Gdi1) from Mus musculus (Mouse).